Here is a 122-residue protein sequence, read N- to C-terminus: Large ribosomal subunit protein uL14c (122 aa).

Belongs to the universal ribosomal protein uL14 family. As to quaternary structure, part of the 50S ribosomal subunit.

It localises to the plastid. It is found in the chloroplast. In terms of biological role, binds to 23S rRNA. The polypeptide is Large ribosomal subunit protein uL14c (Gossypium barbadense (Sea Island cotton)).